We begin with the raw amino-acid sequence, 160 residues long: SsrA-binding protein (160 aa).

It belongs to the SmpB family.

The protein localises to the cytoplasm. In terms of biological role, required for rescue of stalled ribosomes mediated by trans-translation. Binds to transfer-messenger RNA (tmRNA), required for stable association of tmRNA with ribosomes. tmRNA and SmpB together mimic tRNA shape, replacing the anticodon stem-loop with SmpB. tmRNA is encoded by the ssrA gene; the 2 termini fold to resemble tRNA(Ala) and it encodes a 'tag peptide', a short internal open reading frame. During trans-translation Ala-aminoacylated tmRNA acts like a tRNA, entering the A-site of stalled ribosomes, displacing the stalled mRNA. The ribosome then switches to translate the ORF on the tmRNA; the nascent peptide is terminated with the 'tag peptide' encoded by the tmRNA and targeted for degradation. The ribosome is freed to recommence translation, which seems to be the essential function of trans-translation. The polypeptide is SsrA-binding protein (Actinobacillus succinogenes (strain ATCC 55618 / DSM 22257 / CCUG 43843 / 130Z)).